The primary structure comprises 267 residues: B3 domain-containing protein Os02g0455800 (267 aa).

A DNA-binding region (TF-B3) is located at residues 30-131 (EKFLMPSDLC…RLFICCRLGT (102 aa)). Positions 172-221 (QARLHDGNQDGGGAPSRHVPSSGRRVEAQLSRVSSRRQRRTMKHSIPEPT) are disordered. Over residues 205-214 (SSRRQRRTMK) the composition is skewed to basic residues.

The protein resides in the nucleus. The polypeptide is B3 domain-containing protein Os02g0455800 (Oryza sativa subsp. japonica (Rice)).